Here is a 413-residue protein sequence, read N- to C-terminus: Serine hydroxymethyltransferase (413 aa).

Residues Leu117 and 121 to 123 (GHL) contribute to the (6S)-5,6,7,8-tetrahydrofolate site. Lys226 is subject to N6-(pyridoxal phosphate)lysine. Residue 349–351 (SPF) coordinates (6S)-5,6,7,8-tetrahydrofolate.

The protein belongs to the SHMT family. As to quaternary structure, homodimer. Pyridoxal 5'-phosphate is required as a cofactor.

It is found in the cytoplasm. It catalyses the reaction (6R)-5,10-methylene-5,6,7,8-tetrahydrofolate + glycine + H2O = (6S)-5,6,7,8-tetrahydrofolate + L-serine. Its pathway is one-carbon metabolism; tetrahydrofolate interconversion. It functions in the pathway amino-acid biosynthesis; glycine biosynthesis; glycine from L-serine: step 1/1. In terms of biological role, catalyzes the reversible interconversion of serine and glycine with tetrahydrofolate (THF) serving as the one-carbon carrier. This reaction serves as the major source of one-carbon groups required for the biosynthesis of purines, thymidylate, methionine, and other important biomolecules. Also exhibits THF-independent aldolase activity toward beta-hydroxyamino acids, producing glycine and aldehydes, via a retro-aldol mechanism. The polypeptide is Serine hydroxymethyltransferase (Listeria monocytogenes serovar 1/2a (strain ATCC BAA-679 / EGD-e)).